A 102-amino-acid polypeptide reads, in one-letter code: Large ribosomal subunit protein uL23 (102 aa).

It belongs to the universal ribosomal protein uL23 family. As to quaternary structure, part of the 50S ribosomal subunit. Contacts protein L29, and trigger factor when it is bound to the ribosome.

One of the early assembly proteins it binds 23S rRNA. One of the proteins that surrounds the polypeptide exit tunnel on the outside of the ribosome. Forms the main docking site for trigger factor binding to the ribosome. The chain is Large ribosomal subunit protein uL23 from Methylobacillus flagellatus (strain ATCC 51484 / DSM 6875 / VKM B-1610 / KT).